The sequence spans 488 residues: Envelope glycoprotein gp62 (488 aa).

Residues 1–20 (MGKFLATLILFFQFCPLILG) form the signal peptide. At 21–442 (DYSPSCCTLT…LGLSQWAREA (422 aa)) the chain is on the extracellular side. N-linked (GlcNAc...) asparagine; by host glycans are attached at residues Asn140 and Asn222. Residues 225-228 (CIVC) carry the CXXC motif. Cystine bridges form between Cys225–Cys228, Cys225–Cys401, and Cys393–Cys400. N-linked (GlcNAc...) asparagine; by host glycans are attached at residues Asn244 and Asn272. The interval 313-333 (AVPVAVWLVSALAIGAGVAGG) is fusion peptide. Coiled-coil stretches lie at residues 341-387 (ASGK…LLFW) and 397-429 (QEQC…GWGL). The interval 376-392 (AQNRRGLDLLFWEQGGL) is immunosuppression. Residues 393–401 (CKALQEQCC) carry the CX6CC motif. Asn404 is a glycosylation site (N-linked (GlcNAc...) asparagine; by host). A helical transmembrane segment spans residues 443–463 (LQTGITLVALLLLVILAGPCI). Residue Cys462 is the site of S-palmitoyl cysteine; by host attachment. Over 464 to 488 (LRQLRHLPSRVRYPHYSLINPESSL) the chain is Cytoplasmic.

The mature envelope protein (Env) consists of a trimer of SU-TM heterodimers attached by a labile interchain disulfide bond. In terms of processing, specific enzymatic cleavages in vivo yield mature proteins. Envelope glycoproteins are synthesized as an inactive precursor that is N-glycosylated and processed likely by host cell furin or by a furin-like protease in the Golgi to yield the mature SU and TM proteins. The cleavage site between SU and TM requires the minimal sequence [KR]-X-[KR]-R. Post-translationally, the CXXC motif is highly conserved across a broad range of retroviral envelope proteins. It is thought to participate in the formation of a labile disulfide bond possibly with the CX6CC motif present in the transmembrane protein. Isomerization of the intersubunit disulfide bond to an SU intrachain disulfide bond is thought to occur upon receptor recognition in order to allow membrane fusion. The transmembrane protein is palmitoylated.

It localises to the virion membrane. The protein resides in the host cell membrane. The surface protein (SU) attaches the virus to the host cell by binding to its receptor. This interaction triggers the refolding of the transmembrane protein (TM) and is thought to activate its fusogenic potential by unmasking its fusion peptide. Fusion occurs at the host cell plasma membrane. Its function is as follows. The transmembrane protein (TM) acts as a class I viral fusion protein. Under the current model, the protein has at least 3 conformational states: pre-fusion native state, pre-hairpin intermediate state, and post-fusion hairpin state. During viral and target cell membrane fusion, the coiled coil regions (heptad repeats) assume a trimer-of-hairpins structure, positioning the fusion peptide in close proximity to the C-terminal region of the ectodomain. The formation of this structure appears to drive apposition and subsequent fusion of viral and target cell membranes. Membranes fusion leads to delivery of the nucleocapsid into the cytoplasm. This Human T-cell leukemia virus 1 (isolate Caribbea CH subtype A) (HTLV-1) protein is Envelope glycoprotein gp62 (env).